A 194-amino-acid polypeptide reads, in one-letter code: Xanthine phosphoribosyltransferase (194 aa).

Xanthine contacts are provided by Leu20 and Asn27. 5-phospho-alpha-D-ribose 1-diphosphate is bound at residue 128 to 132; it reads ANGQA. Xanthine is bound at residue Lys156.

It belongs to the purine/pyrimidine phosphoribosyltransferase family. Xpt subfamily. Homodimer.

It is found in the cytoplasm. It carries out the reaction XMP + diphosphate = xanthine + 5-phospho-alpha-D-ribose 1-diphosphate. It participates in purine metabolism; XMP biosynthesis via salvage pathway; XMP from xanthine: step 1/1. In terms of biological role, converts the preformed base xanthine, a product of nucleic acid breakdown, to xanthosine 5'-monophosphate (XMP), so it can be reused for RNA or DNA synthesis. This is Xanthine phosphoribosyltransferase from Oceanobacillus iheyensis (strain DSM 14371 / CIP 107618 / JCM 11309 / KCTC 3954 / HTE831).